Reading from the N-terminus, the 428-residue chain is Histidine--tRNA ligase (428 aa).

Belongs to the class-II aminoacyl-tRNA synthetase family. Homodimer.

It is found in the cytoplasm. It carries out the reaction tRNA(His) + L-histidine + ATP = L-histidyl-tRNA(His) + AMP + diphosphate + H(+). In Azotobacter vinelandii (strain DJ / ATCC BAA-1303), this protein is Histidine--tRNA ligase.